A 185-amino-acid polypeptide reads, in one-letter code: Ribosome-recycling factor (185 aa).

It belongs to the RRF family.

The protein resides in the cytoplasm. In terms of biological role, responsible for the release of ribosomes from messenger RNA at the termination of protein biosynthesis. May increase the efficiency of translation by recycling ribosomes from one round of translation to another. The polypeptide is Ribosome-recycling factor (Bacillus cereus (strain G9842)).